The sequence spans 2120 residues: MNTRSLLSAWAALLVVTVRHRAHAMASLYPFWPNDTKTPKVDDGSSSEIKLSVPFIFFRSPYRTVYVNNNGVISFNSLVSQFTPEAFPLADGRAFVAPFCGDVANGIRGEIYYRESTNPELLGESSKDIRKYFKDMASFSASWVFIVTWEEVQFYGGSSTTPVNTFQAVLITDGVSSFAIFNYQEISWTTGTASGGDPLTGLGGVMAQAGFNGGNISNFFSIPGSRTPDIVNIEQTTNVNIPGRWAFKIDGREIDPANLSLRGQFLHQGEIFWENSNCSTKCRCLDFNNEIFCQEMLAPFETVEPKIKFFQCVPVETACVVFGDPHYHTFDGFLFHFQGSCSYLLARQCWPGSQLPYFNVEAKNERGGSSVSWAEDIFVEVYRHKIVLPKGGFGKAKVDDLVVSLGAIKVYQSGLSTALETDFGLLVTYDGQHYASVSVPGTYINGTCGLCGNYNKDPEDDALRSDGRLASSVPELGESWRVPHPERKCSPGCVENCSVCDASRILYSPICGFSQECGAWSVLVATAFVHSCVYDLCSARRTHRLCQAIQVTLRCCQGLGIRWENGVPDGMRGGLAVPGHSHYSGCASGCPATCSDLTAPLRCTAPCPEGCECDDGHVLSARPLHSLCRSGCVVDGRSRCREVFWATADCTAECQCEDGGEAKCFNTSCPEGEVCTIEDGYRGCYPKREGLCSVGQNQVLRTFDGVTFPYPLEHSYTLLKTCMEKPDFIEVDISQKKPDTLPMAGRVVRIQVVGQEVKVGGASLSEVKVNGYDVDLPYFHPSGHLEIYRTDNGTVTESEGLLSIGYYDSGLLEIRLSTAYFNCTGGLCGFFNGNDSDEFCTPKAKCTDNLELFLESWTTFDEICNGECGDLLKACNNDSELLKTYRSRSNCAIINDPTNSSFLECHNVSIVSAYYRTCLFRLCQSGGNQSELCSAVARYASACKNSEVDVGQWRSHSFCPLACPENSHFEECMSCVETCETLATGCCMDTCTEGCQCDEGFALRSPCVPRGECGCNFEGHELATNQTFWMDISCHLLCYCNGSDNSVYCENVLQDDEYYCHVRTDASCIVSGYGHYLTFDGFSFDFQSSCALVLCTTIHGACERSDTFPTFTVTVTAKNEDRDTSLACVVKQVEVEVFNYYIVIHRAYKYTVMINNERLYLPLKLGQGKVNIFAFGFHIVVETDFGLKVVYDWKTFLSVTIPRSFQNLTYGLCGRYNGNPDDDLVAAGGTPRFGVTDFVQSWAKRDTFCRVGSGDRCPACGKVEGFWKPQQLCSLIPSQSGVFAKCHSKINPSYFYKNCLFDTVVDGGAMARRVADWLQNYASTCQTQGIAIIGWRNFTSCSVSCPPNSHYESCVSLCQPRCAAIRLKSDCGHYCVEGCQCDPGYVLNGKSCILPQNCGCYSDGKYYEPKQLFWNGDCTRRCARFRRNLIQCDPRHCKSDEECASRNGVRGCFSTRSSFCLAAGGGVFRTFDGAFLRFPANCAFVLSTICQRLADFSFQLIINFDKWSSPNLTIISVYIYINEEQILISDRSTVKVNGSLVSIPFVTGLSTKIYSQEGFLVIDSGPDIHIRYNGFNVIKITIGDRLQNKVCGLCGNFNGDPADDYATLRGKPVVSSVVLAQSWKTNGMQKSCNELQYSQYAASCDNVQIQKLQSDSYCLKLTDMKGFFQPCYGLLDPLPFYESCFLDGCYNRKQVQLCGSLAAYGEACRTFGILGTEWIEKENCSGVVEDPCAGADCPNRTCELDDGGELCGCIEPPPYGNTTHDIIDAEVTCKAAQMEVSISKCKLFQLGFEREGVRVNDRHCPGIEGEDFISFQINNTKGNCGNLVQSNSTHIVYKNTVWIESANNTGNIITRDRTINVEVFCAYELDIKISLDSVVRPMLSVINLTVPTQEGSFTTKMALYKNSSYKHPYRQGEVVLTTRDVLYVGVFVVGADSNHLILMLNKCYATPSRDSNDKLRYFIIEGGCQNLKDNTIGIEENGVSLTCRFHVTVFKFIGDYDEVHLHCAVSLCDSEKYSCKINCPQHRRSASAFAQEAHEQILSVGPIRRKRSDWCEDNGGCEQICTSQADGPLCSCVTGTLQGDGKSCMASSSSADIRAQASLLVAAQLWLWAALHDPTS.

The first 24 residues, 1–24 (MNTRSLLSAWAALLVVTVRHRAHA), serve as a signal peptide directing secretion. Residues Asn34, Asn215, Asn258, Asn277, Asn445, and Asn496 are each glycosylated (N-linked (GlcNAc...) asparagine). Residues 98–252 (PFCGDVANGI…GRWAFKIDGR (155 aa)) form the NIDO domain. One can recognise a VWFC domain in the interval 260–312 (SLRGQFLHQGEIFWENSNCSTKCRCLDFNNEIFCQEMLAPFETVEPKIKFFQC). In terms of domain architecture, VWFD 1 spans 317 to 490 (TACVVFGDPH…RVPHPERKCS (174 aa)). Cystine bridges form between Cys319–Cys451 and Cys341–Cys489. Positions 578 to 620 (PGHSHYSGCASGCPATCSDLTAPLRCTAPCPEGCECDDGHVLS) constitute a TIL 1 domain. N-linked (GlcNAc...) asparagine glycans are attached at residues Asn666, Asn792, Asn822, Asn834, Asn877, Asn899, Asn907, and Asn928. Positions 690–865 (GLCSVGQNQV…SWTTFDEICN (176 aa)) constitute a VWFD 2 domain. A disulfide bond links Cys692 and Cys828. The region spanning 963-1013 (CPENSHFEECMSCVETCETLATGCCMDTCTEGCQCDEGFALRSPCVPRGEC) is the TIL 2 domain. N-linked (GlcNAc...) asparagine glycans are attached at residues Asn1025, Asn1041, Asn1207, and Asn1337. Positions 1066 to 1250 (ASCIVSGYGH…SWAKRDTFCR (185 aa)) constitute a VWFD 3 domain. 2 disulfides stabilise this stretch: Cys1068–Cys1213 and Cys1090–Cys1249. The TIL 3 domain maps to 1345 to 1398 (CPPNSHYESCVSLCQPRCAAIRLKSDCGHYCVEGCQCDPGYVLNGKSCILPQNC). The VWFD 4 domain occupies 1458-1633 (SFCLAAGGGV…KTNGMQKSCN (176 aa)). Cystine bridges form between Cys1460–Cys1594, Cys1482–Cys1632, Cys1684–Cys1742, Cys1708–Cys1751, Cys1753–Cys1785, Cys1773–Cys1865, and Cys1804–Cys1824. N-linked (GlcNAc...) asparagine glycosylation is found at Asn1511, Asn1537, Asn1723, Asn1739, Asn1761, Asn1818, Asn1831, Asn1847, Asn1887, and Asn1906. The ZP domain maps to 1772–2026 (TCKAAQMEVS…YSCKINCPQH (255 aa)). Disulfide bonds link Cys1947-Cys2007, Cys1968-Cys2023, and Cys2012-Cys2019. Asn2058 is lipidated: GPI-anchor amidated asparagine. The propeptide at 2059–2120 (GGCEQICTSQ…LWAALHDPTS (62 aa)) is removed in mature form.

As to quaternary structure, may form homomeric filament after self-association or heteromeric filament after association with beta-tectorin. Post-translationally, at least 3 products of tectorin seem to exist: HMM, MMM and LMM. They may be generated by active processing or the result of proteolysis occurring between intrachain disulfide bonds. The presence of a hydrophobic C-terminus preceded by a potential cleavage site strongly suggests that tectorins are synthesized as glycosylphosphatidylinositol-linked, membrane-bound precursors. Tectorins are targeted to the apical surface of the inner ear epithelia by the lipid and proteolytically released into the extracellular compartment. As to expression, expressed in the inner ear.

The protein resides in the cell membrane. It is found in the secreted. Its subcellular location is the extracellular space. The protein localises to the extracellular matrix. In terms of biological role, one of the major non-collagenous components of the tectorial membrane. The tectorial membrane is an extracellular matrix of the inner ear that covers the neuroepithelium of the cochlea and contacts the stereocilia bundles of specialized sensory hair cells. Sound induces movement of these hair cells relative to the tectorial membrane, deflects the stereocilia and leads to fluctuations in hair-cell membrane potential, transducing sound into electrical signals. This chain is Alpha-tectorin (TECTA), found in Gallus gallus (Chicken).